The sequence spans 313 residues: Olfactory receptor 1D2 (313 aa).

The Extracellular portion of the chain corresponds to 1 to 25 (MDGGNQSEGSEFLLLGMSESPEQQR). The N-linked (GlcNAc...) asparagine glycan is linked to Asn-5. Residues 26 to 49 (ILFWMFLSMYLVTVLGNVLIILAI) traverse the membrane as a helical segment. The Cytoplasmic segment spans residues 50 to 57 (SSDSRLHT). A helical membrane pass occupies residues 58 to 79 (PMYFFLANLSFTDLFFVTNTIP). The Extracellular portion of the chain corresponds to 80 to 100 (KMLVNLQSQDKAISYAGCLTQ). An intrachain disulfide couples Cys-97 to Cys-189. Residues 101–120 (LYFLLSLVTLDNLILAVMAY) form a helical membrane-spanning segment. Residues 121–139 (DRYVAICCPLHYVTAMSPR) lie on the Cytoplasmic side of the membrane. A helical transmembrane segment spans residues 140–158 (LCILLLSLCWVFSVLYGLI). Topologically, residues 159-196 (HTLLMTRVTFCGSRKIHYLFCEMYFLLRLACSNIQINH) are extracellular. Residue Asn-195 is glycosylated (N-linked (GlcNAc...) asparagine). A helical transmembrane segment spans residues 197–219 (TVLXATGCFIFLIPLGFMIXSYA). Residues 220 to 236 (RIVRAILRIPSATGKYK) lie on the Cytoplasmic side of the membrane. The chain crosses the membrane as a helical span at residues 237 to 259 (AFSTCASHLAVVSLFYGTLGMVY). The Extracellular portion of the chain corresponds to 260 to 271 (LQPLQTYSTKDS). Residues 272-291 (VATVMYAVVTPMMNPFIYSL) form a helical membrane-spanning segment. Topologically, residues 292 to 313 (RNKDIHGALGRLLQGKAFQKLT) are cytoplasmic.

This sequence belongs to the G-protein coupled receptor 1 family.

It is found in the cell membrane. Odorant receptor. In Pongo pygmaeus (Bornean orangutan), this protein is Olfactory receptor 1D2 (OR1D2).